The primary structure comprises 70 residues: Probable protein transport protein Sec61 subunit gamma (70 aa).

Residues 1–33 (MADNADDLFQIPKNFYKEGSHFIKRCVKPDRKE) are Cytoplasmic-facing. The helical transmembrane segment at 34–62 (FLSISKAVATGFVLMGLIGYIIKLIHIPI) threads the bilayer. Topologically, residues 63-70 (NKVLVGGA) are extracellular.

Belongs to the SecE/SEC61-gamma family. Heterotrimeric complex composed of SEC61-alpha, SEC61-beta and SEC61-gamma.

It localises to the endoplasmic reticulum membrane. Necessary for protein translocation in the endoplasmic reticulum. This is Probable protein transport protein Sec61 subunit gamma (sss1) from Schizosaccharomyces pombe (strain 972 / ATCC 24843) (Fission yeast).